Consider the following 168-residue polypeptide: Small ribosomal subunit protein uS5 (168 aa).

In terms of domain architecture, S5 DRBM spans 13–76; that stretch reads LAEKLIAVNR…EKARRNMINV (64 aa).

It belongs to the universal ribosomal protein uS5 family. In terms of assembly, part of the 30S ribosomal subunit. Contacts proteins S4 and S8.

In terms of biological role, with S4 and S12 plays an important role in translational accuracy. Functionally, located at the back of the 30S subunit body where it stabilizes the conformation of the head with respect to the body. In Pseudoalteromonas translucida (strain TAC 125), this protein is Small ribosomal subunit protein uS5.